A 214-amino-acid chain; its full sequence is Adenylate kinase (214 aa).

ATP is bound at residue 10–15; that stretch reads GAGKGT. Residues 30 to 59 form an NMP region; it reads STGDMFREAVASKSELGKKVEEILKRGDLV. Residues T31, R36, 57–59, 85–88, and Q92 contribute to the AMP site; these read DLV and GFPR. The segment at 126 to 163 is LID; it reads NRRICSNCGKIYNLITLPPKVDGKCDVCGGTLYQREDD. R127 lines the ATP pocket. Zn(2+) contacts are provided by C130 and C133. An ATP-binding site is contributed by 136–137; sequence IY. Residues C150 and C153 each contribute to the Zn(2+) site. The AMP site is built by R160 and R171. Residue L199 coordinates ATP.

The protein belongs to the adenylate kinase family. As to quaternary structure, monomer.

It localises to the cytoplasm. It catalyses the reaction AMP + ATP = 2 ADP. Its pathway is purine metabolism; AMP biosynthesis via salvage pathway; AMP from ADP: step 1/1. Functionally, catalyzes the reversible transfer of the terminal phosphate group between ATP and AMP. Plays an important role in cellular energy homeostasis and in adenine nucleotide metabolism. The chain is Adenylate kinase from Thermosipho africanus (strain TCF52B).